A 289-amino-acid polypeptide reads, in one-letter code: Protease HtpX homolog (289 aa).

2 consecutive transmembrane segments (helical) span residues 5–27 and 40–60; these read LWVRTGLLMAFLTGLLVGIGYLI and ALFMNFFSYWFSDSIVLSWYN. Residue H133 participates in Zn(2+) binding. Residue E134 is part of the active site. H137 provides a ligand contact to Zn(2+). The next 2 helical transmembrane spans lie at 143–163 and 181–201; these read TLIQTIAAVLAGAIMVLVNFA and IVALILAIILAPIAATLIQLA. E207 is a binding site for Zn(2+).

The protein belongs to the peptidase M48B family. Zn(2+) serves as cofactor.

It localises to the cell membrane. This Pyrococcus furiosus (strain ATCC 43587 / DSM 3638 / JCM 8422 / Vc1) protein is Protease HtpX homolog.